The chain runs to 312 residues: Ribosomal RNA small subunit methyltransferase H (312 aa).

Residues 32–34 (AGH), D52, F79, D100, and Q107 each bind S-adenosyl-L-methionine.

The protein belongs to the methyltransferase superfamily. RsmH family.

The protein localises to the cytoplasm. It carries out the reaction cytidine(1402) in 16S rRNA + S-adenosyl-L-methionine = N(4)-methylcytidine(1402) in 16S rRNA + S-adenosyl-L-homocysteine + H(+). In terms of biological role, specifically methylates the N4 position of cytidine in position 1402 (C1402) of 16S rRNA. This chain is Ribosomal RNA small subunit methyltransferase H, found in Listeria monocytogenes serotype 4b (strain CLIP80459).